Here is a 922-residue protein sequence, read N- to C-terminus: MMENGGYVGQYGGEENYMEQEEEWEREGLLDPAWEKQQKKTFTAWCNSHLRKAGTSIENIEDDFRNGLKLMLLLEVISGETLPKPDRGKMRFHKIANVNKALDFIASKGVKLVSIGAEEIVDGNLKMTLGMIWTIILRFAIQDISVEEMTAKEGLLLWCQRKTAPYKNVNVQNFHLSFKDGLAFCALIHRHRPDLIDYSKLSKDNPLENLNTAFDVAEKYLDIPRMLDPDDLINTPKPDERAIMTYVSCYYHAFQGAQQPGSTPFVIHLTKTGLSYRFFVRLFAAETAANRICKVLKVNQENERLMEEYERLASDLLEWIRRTMPWLNSRQSDSTLAGVQKKLEEYRTYRRKHKPPRVEQKAKLETNFNTLQTKLRLSNRPAYMPTEGKMVSDITNSWKGLEHAEKAFEEWLLAETMRLERLEHLAQKFKHKADTHEDWTKGKEEMLQSQDFRNCKLNELKALKKKHEAFESDLAAHQDRVEQIAAIAQELNTLEYHDCASVNARCQRICDQWDRLGALTQRRRQGLDEAERILEKIDLLHLEFAKRAAPFNNWLDGAREDLVDMFIVHTMEEIQGLIQAHDQFKATLGEADKEFNVIIGLVRDAEAIVKQEQVPGGLVNPYTTLSADLISRKWSEVRALVPQRDQTLANELRKQQNNEMLRRQFAEKANAVGPWIERQMDAVTAIGMGISGSLEEQLHRLKEYEQAVYAYKPSIEELEKIHQAVQESMIFENRYTHYTMETLRVGWEQLLTSINRNINEVENQILTRDSKGITQEQLTEFRSSFNHFDKNRTGRLAPEEFKSCLVSLGYSIGKDKQGDMDFQRILAVVDPNASGYVQFDAFLDFMTRESTDTDTAEQVIDSFRILASDRPYILPDELRRELPPDQAEYCIQRMPPYKGPNAIPGALDYMSFSTALYGESDL.

An actin-binding region spans residues M1 to H252. Calponin-homology (CH) domains follow at residues K36–A140 and M149–Q255. Spectrin repeat units lie at residues A253–D393, I394–R508, I509–L629, and I630–T742. 2 consecutive EF-hand domains span residues E776 to S811 and Q817 to D852. Ca(2+) contacts are provided by D789, N791, T793, R795, and E800.

Belongs to the alpha-actinin family. As to quaternary structure, homodimer; antiparallel.

Functionally, F-actin cross-linking protein which is thought to anchor actin to a variety of intracellular structures. This is a bundling protein. This chain is Alpha-actinin, sarcomeric (Actn), found in Anopheles gambiae (African malaria mosquito).